We begin with the raw amino-acid sequence, 152 residues long: Endoribonuclease YbeY (152 aa).

3 residues coordinate Zn(2+): His-114, His-118, and His-124.

The protein belongs to the endoribonuclease YbeY family. The cofactor is Zn(2+).

It is found in the cytoplasm. Single strand-specific metallo-endoribonuclease involved in late-stage 70S ribosome quality control and in maturation of the 3' terminus of the 16S rRNA. The sequence is that of Endoribonuclease YbeY from Wigglesworthia glossinidia brevipalpis.